A 411-amino-acid chain; its full sequence is MLDLKNLQNNFDEVAKKLKNKKVDENILKKLAELFASLKKEKIALEEFQAFQNKFSKELATAEDKESLKAKLSENKSKINEQSAKVNALENELEEIAHAIPNIPDECVPVGEDENENVELKKVLNPPSFDFTPKEHFELGESLNWLDFIRGVKISQSRFCVLKNEGALLSRALVNYMIDFNRSRGFEFVNVPFLVNGATMFGTGQLPKFKEDMYKVDDEDLYLISTSEIPVTNLYSGEILASETLPIKMTCYSACFRKEAGSAGRDTRGIIRQHQFEKVELVSITKTEQSDSVFNEMLECASDLLSSLGLAHRHLMLCTGDLGFSAAKTVDLEVWLPGQNKYREISSVSNCRDFQARRAKIRYKNEQGKNELVHTLNGSSLAVGRTLVAIMENYQDKEGKIHIPDVLKKYF.

Residue 226-228 (TSE) coordinates L-serine. Residue 257 to 259 (RKE) coordinates ATP. Position 280 (glutamate 280) interacts with L-serine. Position 344–347 (344–347 (EISS)) interacts with ATP. Serine 379 is a binding site for L-serine.

This sequence belongs to the class-II aminoacyl-tRNA synthetase family. Type-1 seryl-tRNA synthetase subfamily. In terms of assembly, homodimer. The tRNA molecule binds across the dimer.

Its subcellular location is the cytoplasm. It catalyses the reaction tRNA(Ser) + L-serine + ATP = L-seryl-tRNA(Ser) + AMP + diphosphate + H(+). The catalysed reaction is tRNA(Sec) + L-serine + ATP = L-seryl-tRNA(Sec) + AMP + diphosphate + H(+). The protein operates within aminoacyl-tRNA biosynthesis; selenocysteinyl-tRNA(Sec) biosynthesis; L-seryl-tRNA(Sec) from L-serine and tRNA(Sec): step 1/1. In terms of biological role, catalyzes the attachment of serine to tRNA(Ser). Is also able to aminoacylate tRNA(Sec) with serine, to form the misacylated tRNA L-seryl-tRNA(Sec), which will be further converted into selenocysteinyl-tRNA(Sec). The protein is Serine--tRNA ligase of Campylobacter jejuni (strain RM1221).